We begin with the raw amino-acid sequence, 149 residues long: Ribosome maturation factor RimP (149 aa).

Belongs to the RimP family.

Its subcellular location is the cytoplasm. Functionally, required for maturation of 30S ribosomal subunits. The polypeptide is Ribosome maturation factor RimP (Neisseria gonorrhoeae (strain NCCP11945)).